We begin with the raw amino-acid sequence, 32 residues long: Calcitonin (32 aa).

Residues Cys1 and Cys7 are joined by a disulfide bond. At Pro32 the chain carries Proline amide.

The protein belongs to the calcitonin family.

The protein localises to the secreted. In terms of biological role, causes a rapid but short-lived drop in the level of calcium and phosphate in blood by promoting the incorporation of those ions in the bones. In Aquarana catesbeiana (American bullfrog), this protein is Calcitonin.